A 300-amino-acid polypeptide reads, in one-letter code: tRNA U34 carboxymethyltransferase (300 aa).

Residues Lys-73, Trp-87, Lys-92, Gly-111, 133–135 (DPS), 160–161 (VE), Tyr-180, and Arg-293 each bind carboxy-S-adenosyl-L-methionine.

Belongs to the class I-like SAM-binding methyltransferase superfamily. CmoB family. As to quaternary structure, homotetramer.

The enzyme catalyses carboxy-S-adenosyl-L-methionine + 5-hydroxyuridine(34) in tRNA = 5-carboxymethoxyuridine(34) in tRNA + S-adenosyl-L-homocysteine + H(+). Catalyzes carboxymethyl transfer from carboxy-S-adenosyl-L-methionine (Cx-SAM) to 5-hydroxyuridine (ho5U) to form 5-carboxymethoxyuridine (cmo5U) at position 34 in tRNAs. The polypeptide is tRNA U34 carboxymethyltransferase (Nautilia profundicola (strain ATCC BAA-1463 / DSM 18972 / AmH)).